Here is a 907-residue protein sequence, read N- to C-terminus: Leucine-rich repeat-containing G-protein coupled receptor 5 (907 aa).

The signal sequence occupies residues 1 to 21; sequence MDTSCVHMLLSLLALLQLVAA. Over 22 to 561 the chain is Extracellular; the sequence is GSSPGPDAIP…EHLFGSWLIR (540 aa). Positions 25–66 constitute an LRRNT domain; it reads PGPDAIPRGCPSHCHCELDGRMLLRVDCSDLGLSELPSNLSV. 2 cysteine pairs are disulfide-bonded: Cys-34–Cys-40 and Cys-38–Cys-52. N-linked (GlcNAc...) asparagine glycans are attached at residues Asn-63 and Asn-77. 16 LRR repeats span residues 67 to 88, 91 to 112, 115 to 136, 139 to 160, 163 to 184, 187 to 208, 211 to 232, 235 to 256, 258 to 279, 282 to 303, 306 to 325, 329 to 350, 353 to 374, 375 to 396, 399 to 420, and 423 to 446; these read FTSYLDLSMNNISQLPASLLHR, FLEELRLAGNALTHIPKGAFTG, SLKVLMLQNNQLRQVPEEALQN, SLQSLRLDANHISYVPPSCFSG, SLRHLWLDDNALTDVPVQAFRS, ALQAMTLALNKIHHIADYAFGN, SLVVLHLHNNRIHSLGKKCFDG, SLETLDLNYNNLDEFPTAIKTL, NLKELGFHSNNIRSIPERAFVG, SLITIHFYDNPIQFVGVSAFQH, ELRTLTLNGASHITEFPHLT, TLESLTLTGAKISSLPQAVCDQ, NLQVLDLSYNLLEDLPSLSGCQ, KLQKIDLRHNEIYEIKGSTFQQ, NLRSLNLAWNKIAIIHPNAFST, and SLIKLDLSSNLLSSFPVTGLHGLT. An N-linked (GlcNAc...) asparagine glycan is attached at Asn-208. Cys-348 and Cys-373 form a disulfide bridge. Cysteines 479 and 541 form a disulfide. The chain crosses the membrane as a helical span at residues 562–582; that stretch reads IGVWTTAVLALSCNALVALTV. Over 583-593 the chain is Cytoplasmic; that stretch reads FRTPLYISSIK. Residues 594–614 form a helical membrane-spanning segment; sequence LLIGVIAVVDILMGVSSAVLA. Residues 615–638 lie on the Extracellular side of the membrane; the sequence is AVDAFTFGRFAQHGAWWEDGIGCQ. A disulfide bridge connects residues Cys-637 and Cys-712. Residues 639–659 traverse the membrane as a helical segment; that stretch reads IVGFLSIFASESSIFLLTLAA. At 660-682 the chain is on the cytoplasmic side; it reads LERGFSVKCSSKFEVKAPLFSLR. A helical transmembrane segment spans residues 683 to 703; that stretch reads AIVLLCVLLALTIATIPLLGG. The Extracellular portion of the chain corresponds to 704 to 723; that stretch reads SKYNASPLCLPLPFGEPSTT. Residues 724 to 744 form a helical membrane-spanning segment; that stretch reads GYMVALVLLNSLCFLIMTIAY. The Cytoplasmic segment spans residues 745–767; sequence TKLYCSLEKGELENLWDCSMVKH. The helical transmembrane segment at 768–788 threads the bilayer; it reads IALLLFANCILYCPVAFLSFS. Over 789 to 802 the chain is Extracellular; that stretch reads SLLNLTFISPDVIK. An N-linked (GlcNAc...) asparagine glycan is attached at Asn-792. The helical transmembrane segment at 803 to 823 threads the bilayer; that stretch reads FILLVIVPLPSCLNPLLYIVF. Residues 824–907 are Cytoplasmic-facing; the sequence is NPHFKEDMGS…LSSVAFVPCL (84 aa).

This sequence belongs to the G-protein coupled receptor 1 family. As to quaternary structure, identified in a complex composed of RNF43, LGR5 and RSPO1. Also interacts with other R-spondin ligands, including RSPO2, RSPO3 and RSPO4. In terms of tissue distribution, expressed in the intestinal epithelium (at protein level). Expressed in the gonads, the adrenal gland, and in the brain. In the central nervous system expression is restricted to the olfactory bulb. In the adrenal gland detected only in the neural-crest derived chromaffin cells of the medulla, but not in the cells of the adrenal cortex. In the gonads, the expression is high in Graafian follicle, but absent from primary and secondary follicles. In the intestine, exclusively expressed in cycling crypt base columnar cells. Expressed in the lower bulge and secondary germ area of telogen hair follicles and in the lower outer root sheath of anagen hair follicle.

The protein resides in the cell membrane. It localises to the golgi apparatus. The protein localises to the trans-Golgi network membrane. Receptor for R-spondins that potentiates the canonical Wnt signaling pathway and acts as a stem cell marker of the intestinal epithelium and the hair follicle. Upon binding to R-spondins (RSPO1, RSPO2, RSPO3 or RSPO4), associates with phosphorylated LRP6 and frizzled receptors that are activated by extracellular Wnt receptors, triggering the canonical Wnt signaling pathway to increase expression of target genes. In contrast to classical G-protein coupled receptors, does not activate heterotrimeric G-proteins to transduce the signal. Involved in the development and/or maintenance of the adult intestinal stem cells during postembryonic development. The sequence is that of Leucine-rich repeat-containing G-protein coupled receptor 5 (Lgr5) from Mus musculus (Mouse).